The following is a 343-amino-acid chain: S-adenosylmethionine:tRNA ribosyltransferase-isomerase (343 aa).

It belongs to the QueA family. As to quaternary structure, monomer.

The protein resides in the cytoplasm. The enzyme catalyses 7-aminomethyl-7-carbaguanosine(34) in tRNA + S-adenosyl-L-methionine = epoxyqueuosine(34) in tRNA + adenine + L-methionine + 2 H(+). It functions in the pathway tRNA modification; tRNA-queuosine biosynthesis. Functionally, transfers and isomerizes the ribose moiety from AdoMet to the 7-aminomethyl group of 7-deazaguanine (preQ1-tRNA) to give epoxyqueuosine (oQ-tRNA). This Geobacter sulfurreducens (strain ATCC 51573 / DSM 12127 / PCA) protein is S-adenosylmethionine:tRNA ribosyltransferase-isomerase.